The primary structure comprises 348 residues: Ion-translocating oxidoreductase complex subunit D (348 aa).

Helical transmembrane passes span 25–45, 68–88, and 124–144; these read ILAA…GTFI, PISP…IGVA, and AMAA…TWAA. Position 182 is an FMN phosphoryl threonine (threonine 182). The next 5 membrane-spanning stretches (helical) occupy residues 211-231, 237-257, 263-283, 296-316, and 317-337; these read TGEG…FLLA, WHIS…GFGA, ASPL…FIAT, LLFG…GGYP, and DGVA…DYYI.

Belongs to the NqrB/RnfD family. As to quaternary structure, the complex is composed of six subunits: RnfA, RnfB, RnfC, RnfD, RnfE and RnfG. Requires FMN as cofactor.

Its subcellular location is the cell inner membrane. Its function is as follows. Part of a membrane-bound complex that couples electron transfer with translocation of ions across the membrane. The polypeptide is Ion-translocating oxidoreductase complex subunit D (Shewanella amazonensis (strain ATCC BAA-1098 / SB2B)).